We begin with the raw amino-acid sequence, 335 residues long: Histidinol-phosphate aminotransferase (335 aa).

Lysine 202 is subject to N6-(pyridoxal phosphate)lysine.

The protein belongs to the class-II pyridoxal-phosphate-dependent aminotransferase family. Histidinol-phosphate aminotransferase subfamily. As to quaternary structure, homodimer. It depends on pyridoxal 5'-phosphate as a cofactor.

It catalyses the reaction L-histidinol phosphate + 2-oxoglutarate = 3-(imidazol-4-yl)-2-oxopropyl phosphate + L-glutamate. It functions in the pathway amino-acid biosynthesis; L-histidine biosynthesis; L-histidine from 5-phospho-alpha-D-ribose 1-diphosphate: step 7/9. This Thermotoga maritima (strain ATCC 43589 / DSM 3109 / JCM 10099 / NBRC 100826 / MSB8) protein is Histidinol-phosphate aminotransferase.